We begin with the raw amino-acid sequence, 199 residues long: MIASVRGEVLEVALDHAVIEAAGVGYRVNATPSTLSTLRTGTQARLITAMIVREDSMTLYGFTDAETRDLFLTLLSVSGVGPRLAMATLAVHDAGALRQALHDGDVAALTRVPGIGKRGAERMVLELRDKIGAAGAAGAPAGAARNGHAVRGPVVEALVGLGFAAKQAEEATDKVLAAEPEAGTSGALRAALSLLGKSR.

A domain I region spans residues 1–63 (MIASVRGEVL…EDSMTLYGFT (63 aa)). Residues 64–142 (DAETRDLFLT…AAGAAGAPAG (79 aa)) form a domain II region. The flexible linker stretch occupies residues 143-153 (AARNGHAVRGP). The tract at residues 153–199 (PVVEALVGLGFAAKQAEEATDKVLAAEPEAGTSGALRAALSLLGKSR) is domain III.

It belongs to the RuvA family. In terms of assembly, homotetramer. Forms an RuvA(8)-RuvB(12)-Holliday junction (HJ) complex. HJ DNA is sandwiched between 2 RuvA tetramers; dsDNA enters through RuvA and exits via RuvB. An RuvB hexamer assembles on each DNA strand where it exits the tetramer. Each RuvB hexamer is contacted by two RuvA subunits (via domain III) on 2 adjacent RuvB subunits; this complex drives branch migration. In the full resolvosome a probable DNA-RuvA(4)-RuvB(12)-RuvC(2) complex forms which resolves the HJ.

It localises to the cytoplasm. In terms of biological role, the RuvA-RuvB-RuvC complex processes Holliday junction (HJ) DNA during genetic recombination and DNA repair, while the RuvA-RuvB complex plays an important role in the rescue of blocked DNA replication forks via replication fork reversal (RFR). RuvA specifically binds to HJ cruciform DNA, conferring on it an open structure. The RuvB hexamer acts as an ATP-dependent pump, pulling dsDNA into and through the RuvAB complex. HJ branch migration allows RuvC to scan DNA until it finds its consensus sequence, where it cleaves and resolves the cruciform DNA. This Mycobacterium avium (strain 104) protein is Holliday junction branch migration complex subunit RuvA.